Consider the following 241-residue polypeptide: Glucosamine-6-phosphate deaminase (241 aa).

The Proton acceptor; for enolization step role is filled by Asp67. The active-site For ring-opening step is Asn136. His138 serves as the catalytic Proton acceptor; for ring-opening step. Residue Glu143 is the For ring-opening step of the active site.

It belongs to the glucosamine/galactosamine-6-phosphate isomerase family. NagB subfamily.

It catalyses the reaction alpha-D-glucosamine 6-phosphate + H2O = beta-D-fructose 6-phosphate + NH4(+). It functions in the pathway amino-sugar metabolism; N-acetylneuraminate degradation; D-fructose 6-phosphate from N-acetylneuraminate: step 5/5. Catalyzes the reversible isomerization-deamination of glucosamine 6-phosphate (GlcN6P) to form fructose 6-phosphate (Fru6P) and ammonium ion. This Bacillus velezensis (strain DSM 23117 / BGSC 10A6 / LMG 26770 / FZB42) (Bacillus amyloliquefaciens subsp. plantarum) protein is Glucosamine-6-phosphate deaminase.